The following is a 312-amino-acid chain: Aquaglyceroporin-2 (312 aa).

6 helical membrane-spanning segments follow: residues 78-98 (FLGN…SLLV), 104-124 (LGLT…SLGI), 151-171 (YIAA…GVFA), 203-223 (GIFY…LCVC), 239-259 (VAIG…SPLA), and 286-306 (YYFW…LFLY).

Belongs to the MIP/aquaporin (TC 1.A.8) family.

The protein resides in the membrane. The catalysed reaction is glycerol(in) = glycerol(out). The enzyme catalyses H2O(in) = H2O(out). It carries out the reaction urea(in) = urea(out). Its function is as follows. Mediates water and glycerol transport across cell membranes. Permeable to urea. Permeable to methylamine/methylammonium. Permeable to dihydroxyacetone. The protein is Aquaglyceroporin-2 of Trypanosoma brucei brucei.